Reading from the N-terminus, the 168-residue chain is Regulatory protein RecX (168 aa).

The protein belongs to the RecX family.

It is found in the cytoplasm. Its function is as follows. Modulates RecA activity. The sequence is that of Regulatory protein RecX from Serratia proteamaculans (strain 568).